A 254-amino-acid polypeptide reads, in one-letter code: Undecaprenyl-diphosphatase (254 aa).

8 helical membrane-spanning segments follow: residues 1 to 21, 41 to 61, 70 to 90, 97 to 117, 134 to 154, 175 to 195, 209 to 229, and 234 to 254; these read MDII…FLPI, LTKA…MLIY, IDLW…GFIF, LFNV…FLIV, VSWT…IPGT, AEFS…YDLL, FLIG…LFLV, and FTFV…LMIL.

This sequence belongs to the UppP family.

Its subcellular location is the cell inner membrane. It catalyses the reaction di-trans,octa-cis-undecaprenyl diphosphate + H2O = di-trans,octa-cis-undecaprenyl phosphate + phosphate + H(+). In terms of biological role, catalyzes the dephosphorylation of undecaprenyl diphosphate (UPP). Confers resistance to bacitracin. The sequence is that of Undecaprenyl-diphosphatase from Sulfurovum sp. (strain NBC37-1).